The following is an 804-amino-acid chain: Leucine--tRNA ligase (804 aa).

A 'HIGH' region motif is present at residues Pro40–His51. The short motif at Lys576–Ser580 is the 'KMSKS' region element. Lys579 is a binding site for ATP.

This sequence belongs to the class-I aminoacyl-tRNA synthetase family.

It localises to the cytoplasm. The catalysed reaction is tRNA(Leu) + L-leucine + ATP = L-leucyl-tRNA(Leu) + AMP + diphosphate. The protein is Leucine--tRNA ligase of Staphylococcus aureus (strain Mu3 / ATCC 700698).